A 259-amino-acid polypeptide reads, in one-letter code: GTP-binding protein RHO4 (259 aa).

59–66 lines the GTP pocket; it reads GDGATGKT. Positions 81 to 89 match the Effector region motif; that stretch reads YVPTIFENY. GTP contacts are provided by residues 107–111 and 165–168; these read DTAGQ and LKSD. Cysteine methyl ester is present on C256. C256 carries S-geranylgeranyl cysteine lipidation. Positions 257-259 are cleaved as a propeptide — removed in mature form; that stretch reads VVL.

It belongs to the small GTPase superfamily. Rho family.

It localises to the cell membrane. The chain is GTP-binding protein RHO4 (RHO4) from Eremothecium gossypii (strain ATCC 10895 / CBS 109.51 / FGSC 9923 / NRRL Y-1056) (Yeast).